A 720-amino-acid polypeptide reads, in one-letter code: Denticleless protein homolog (720 aa).

WD repeat units lie at residues 43-85 (GMPV…TTKL), 92-131 (AHSN…LLGI), and 134-174 (GHQC…KDGF). A DDB1-binding motif motif is present at residues 164 to 167 (WDTR). Residues 193 to 200 (PSKLRKKR) carry the Nuclear localization signal motif. WD repeat units lie at residues 211 to 250 (DFQQ…AAYR), 266 to 305 (TRKL…TFPV), 310 to 351 (GHQN…LPPR), and 355 to 395 (GHSQ…EEEK). Positions 240–243 (WDLR) match the DDB1-binding motif motif. 4 disordered regions span residues 411–437 (KPEE…VGSP), 476–495 (PAKL…PSSK), 528–552 (QSLL…KRRL), and 607–698 (NEHE…TSPK). Positions 528-542 (QSLLETSSTPKAQHS) are enriched in polar residues. Basic and acidic residues-rich tracts occupy residues 543 to 552 (QAEKRAKRRL) and 642 to 660 (CERD…ERKN).

Belongs to the WD repeat cdt2 family. Component of the DCX(DTL) E3 ubiquitin ligase complex, at least composed of CUL4 (CUL4A or CUL4B), DDB1, DTL/CDT2 and RBX1.

Its subcellular location is the nucleus. The protein localises to the cytoplasm. It localises to the cytoskeleton. The protein resides in the microtubule organizing center. It is found in the centrosome. Its subcellular location is the chromosome. It functions in the pathway protein modification; protein ubiquitination. Substrate-specific adapter of a DCX (DDB1-CUL4-X-box) E3 ubiquitin-protein ligase complex required for cell cycle control, DNA damage response and translesion DNA synthesis. The DCX(DTL) complex, also named CRL4(CDT2) complex, mediates the polyubiquitination and subsequent degradation of CDT1, CDKN1A/p21(CIP1), KMT5A and SDE2. CDT1 degradation in response to DNA damage is necessary to ensure proper cell cycle regulation of DNA replication. CDKN1A/p21(CIP1) degradation during S phase or following UV irradiation is essential to control replication licensing. KMT5A degradation is also important for a proper regulation of mechanisms such as TGF-beta signaling, cell cycle progression, DNA repair and cell migration. Most substrates require their interaction with PCNA for their polyubiquitination: substrates interact with PCNA via their PIP-box, and those containing the 'K+4' motif in the PIP box, recruit the DCX(DTL) complex, leading to their degradation. In undamaged proliferating cells, the DCX(DTL) complex also promotes the 'Lys-164' monoubiquitination of PCNA, thereby being involved in PCNA-dependent translesion DNA synthesis. May play a role in the regulation of the circadian clock. In Gallus gallus (Chicken), this protein is Denticleless protein homolog (DTL).